A 120-amino-acid polypeptide reads, in one-letter code: Flagellar protein FliT (120 aa).

A required for homodimerization region spans residues 1–50; it reads MENLSPLLIEYQGLLKLIRNIKAMALNGLWDDVVEQEIVYIQSIERISQI. The segment at 60–98 is fliD binding; sequence VQLQFRQLLQDILDTESQVKELLQNRMQELAVLIQQSQN.

This sequence belongs to the FliT family. In terms of assembly, homodimer. Interacts with FliD and FlhC.

It localises to the cytoplasm. It is found in the cytosol. Dual-function protein that regulates the transcription of class 2 flagellar operons and that also acts as an export chaperone for the filament-capping protein FliD. As a transcriptional regulator, acts as an anti-FlhDC factor; it directly binds FlhC, thus inhibiting the binding of the FlhC/FlhD complex to class 2 promoters, resulting in decreased expression of class 2 flagellar operons. As a chaperone, effects FliD transition to the membrane by preventing its premature polymerization, and by directing it to the export apparatus. This is Flagellar protein FliT from Dickeya chrysanthemi (Pectobacterium chrysanthemi).